A 113-amino-acid chain; its full sequence is Nucleoid-associated protein Syncc9605_0027 (113 aa).

The protein belongs to the YbaB/EbfC family. In terms of assembly, homodimer.

The protein localises to the cytoplasm. It localises to the nucleoid. Its function is as follows. Binds to DNA and alters its conformation. May be involved in regulation of gene expression, nucleoid organization and DNA protection. The sequence is that of Nucleoid-associated protein Syncc9605_0027 from Synechococcus sp. (strain CC9605).